A 176-amino-acid chain; its full sequence is ATP-dependent protease subunit HslV (176 aa).

Thr2 is a catalytic residue. 3 residues coordinate Na(+): Ser157, Cys160, and Thr163.

The protein belongs to the peptidase T1B family. HslV subfamily. In terms of assembly, a double ring-shaped homohexamer of HslV is capped on each side by a ring-shaped HslU homohexamer. The assembly of the HslU/HslV complex is dependent on binding of ATP.

It localises to the cytoplasm. It carries out the reaction ATP-dependent cleavage of peptide bonds with broad specificity.. Its activity is regulated as follows. Allosterically activated by HslU binding. Its function is as follows. Protease subunit of a proteasome-like degradation complex believed to be a general protein degrading machinery. The polypeptide is ATP-dependent protease subunit HslV (Buchnera aphidicola subsp. Baizongia pistaciae (strain Bp)).